The sequence spans 250 residues: Probable transcriptional regulatory protein Ctha_1786 (250 aa).

It belongs to the TACO1 family.

The protein localises to the cytoplasm. The protein is Probable transcriptional regulatory protein Ctha_1786 of Chloroherpeton thalassium (strain ATCC 35110 / GB-78).